Reading from the N-terminus, the 101-residue chain is Small ribosomal subunit protein bS6 (101 aa).

Belongs to the bacterial ribosomal protein bS6 family. Part of the 30S ribosomal subunit. Forms a tight heterodimer with protein bS18.

In terms of biological role, located on the outer edge of the platform on the body of the 30S subunit. The polypeptide is Small ribosomal subunit protein bS6 (rpsF) (Thermus thermophilus (strain ATCC BAA-163 / DSM 7039 / HB27)).